The chain runs to 185 residues: Transcription termination/antitermination protein NusG (185 aa).

The region spanning 134–162 is the KOW domain; sequence PGQMVRVIDGPFNDFDGLVEEVNYEKNRL.

Belongs to the NusG family.

Its function is as follows. Participates in transcription elongation, termination and antitermination. The polypeptide is Transcription termination/antitermination protein NusG (Xylella fastidiosa (strain 9a5c)).